A 213-amino-acid chain; its full sequence is Calcium-dependent cell adhesion molecule 1 (213 aa).

4 repeat units span residues 1 to 48 (MSVD…LVGS), 49 to 97 (NVRC…GAFQ), 98 to 146 (WAVD…LTPP), and 147 to 194 (DSEI…FPKN). The 4 X approximate tandem repeats stretch occupies residues 1–194 (MSVDANKVKF…IKKDETFPKN (194 aa)).

It belongs to the Dictyostelium CAD family. In terms of processing, the N-terminus is blocked.

It is found in the cell membrane. Its function is as follows. Mediates calcium-dependent cell-cell adhesion during the early stage of development. The protein is Calcium-dependent cell adhesion molecule 1 (cadA) of Dictyostelium discoideum (Social amoeba).